The primary structure comprises 319 residues: HPr kinase/phosphorylase (319 aa).

Active-site residues include His-146 and Lys-167. 161-168 (GESGLGKS) is a binding site for ATP. Residue Ser-168 participates in Mg(2+) binding. Asp-185 acts as the Proton acceptor; for phosphorylation activity. Proton donor; for dephosphorylation activity in catalysis. The interval 209–218 (LEVRGIGLLD) is important for the catalytic mechanism of both phosphorylation and dephosphorylation. Glu-210 is a binding site for Mg(2+). Residue Arg-252 is part of the active site. An important for the catalytic mechanism of dephosphorylation region spans residues 273 to 278 (QVVAGR).

Belongs to the HPrK/P family. As to quaternary structure, homohexamer. The cofactor is Mg(2+).

The enzyme catalyses [HPr protein]-L-serine + ATP = [HPr protein]-O-phospho-L-serine + ADP + H(+). It carries out the reaction [HPr protein]-O-phospho-L-serine + phosphate + H(+) = [HPr protein]-L-serine + diphosphate. Functionally, catalyzes the ATP- as well as the pyrophosphate-dependent phosphorylation of a specific serine residue in HPr, a phosphocarrier protein of the phosphoenolpyruvate-dependent sugar phosphotransferase system (PTS). HprK/P also catalyzes the pyrophosphate-producing, inorganic phosphate-dependent dephosphorylation (phosphorolysis) of seryl-phosphorylated HPr (P-Ser-HPr). The sequence is that of HPr kinase/phosphorylase from Variovorax paradoxus (strain S110).